We begin with the raw amino-acid sequence, 218 residues long: Elongation factor Ts (218 aa).

The tract at residues 82–85 is involved in Mg(2+) ion dislocation from EF-Tu; it reads TDFV.

This sequence belongs to the EF-Ts family.

It is found in the cytoplasm. Associates with the EF-Tu.GDP complex and induces the exchange of GDP to GTP. It remains bound to the aminoacyl-tRNA.EF-Tu.GTP complex up to the GTP hydrolysis stage on the ribosome. This is Elongation factor Ts from Prochlorococcus marinus (strain NATL2A).